A 145-amino-acid chain; its full sequence is 3-hydroxyacyl-[acyl-carrier-protein] dehydratase FabZ (145 aa).

Residue His-49 is part of the active site.

The protein belongs to the thioester dehydratase family. FabZ subfamily.

The protein resides in the cytoplasm. It catalyses the reaction a (3R)-hydroxyacyl-[ACP] = a (2E)-enoyl-[ACP] + H2O. In terms of biological role, involved in unsaturated fatty acids biosynthesis. Catalyzes the dehydration of short chain beta-hydroxyacyl-ACPs and long chain saturated and unsaturated beta-hydroxyacyl-ACPs. The polypeptide is 3-hydroxyacyl-[acyl-carrier-protein] dehydratase FabZ (Rickettsia peacockii (strain Rustic)).